The chain runs to 148 residues: Probable calcium-binding protein CML14 (148 aa).

EF-hand domains follow at residues 9–44, 80–115, and 116–148; these read DQVS…LGGN, PFDR…IGEK, and LQPS…MVAK. Asp-22, Asp-24, Asp-26, Lys-28, and Glu-33 together coordinate Ca(2+).

Potential calcium sensor. In Arabidopsis thaliana (Mouse-ear cress), this protein is Probable calcium-binding protein CML14 (CML14).